The chain runs to 118 residues: Ferredoxin-thioredoxin reductase, catalytic chain (118 aa).

C57 is a binding site for [4Fe-4S] cluster. The active-site Nucleophile is C59. A disulfide bridge connects residues C59 and C89. [4Fe-4S] cluster is bound by residues C76, C78, and C87.

Belongs to the ferredoxin thioredoxin reductase beta subunit family. In terms of assembly, heterodimer of subunit A (variable subunit) and subunit B (catalytic subunit). Heterodimeric FTR forms a complex with ferredoxin and thioredoxin. [4Fe-4S] cluster is required as a cofactor.

The protein resides in the plastid. It is found in the chloroplast. It carries out the reaction [thioredoxin]-disulfide + 2 reduced [2Fe-2S]-[ferredoxin] + 2 H(+) = [thioredoxin]-dithiol + 2 oxidized [2Fe-2S]-[ferredoxin]. Functionally, catalytic subunit of the ferredoxin-thioredoxin reductase (FTR), which catalyzes the two-electron reduction of thioredoxins by the electrons provided by reduced ferredoxin. The polypeptide is Ferredoxin-thioredoxin reductase, catalytic chain (ftrB) (Porphyra purpurea (Red seaweed)).